Consider the following 180-residue polypeptide: Large ribosomal subunit protein bL17 (180 aa).

The segment at 134–180 (AQAKAKKAAAMPTEESEAKPAEEGDVVGASEPDAKAPEEPPAEAPEN) is disordered.

It belongs to the bacterial ribosomal protein bL17 family. Part of the 50S ribosomal subunit. Contacts protein L32.

This is Large ribosomal subunit protein bL17 from Mycobacterium tuberculosis (strain ATCC 25177 / H37Ra).